A 120-amino-acid chain; its full sequence is Alpha-amylase inhibitor Haim-2 (120 aa).

The signal sequence occupies residues 1–32 (MKRYVCSTFVACVMVLCVIPASGAAAHEAVAE). Disulfide bonds link C43–C59 and C77–C104.

Its function is as follows. Inhibits mammalian alpha-amylases specifically but has no action on plant and microbial alpha-amylases. This chain is Alpha-amylase inhibitor Haim-2, found in Streptomyces griseosporeus.